We begin with the raw amino-acid sequence, 200 residues long: MKLKSIMSQCQFIIGATSIKSLPDFSIPEVALAGRSNVGKSSLINAITNNRKNARISSKPGCTRQINFYLINKGLMVLVDLPGYGYSKADRATVNSYICLMEYYLLNRKNLSKVVLLIDAKVGFKEIDLDFIRWLEVHQILYQLVLTKIDRVQSNVLDVIVSDVQNFNLNFIIYPIINVSSKCKQGIEELIYEIAQCIKK.

The EngB-type G domain maps to 26–200 (SIPEVALAGR…IYEIAQCIKK (175 aa)). Residues 34–41 (GRSNVGKS), 61–65 (GCTRQ), 80–83 (DLPG), 147–150 (TKID), and 179–181 (VSS) contribute to the GTP site. Mg(2+) is bound by residues serine 41 and threonine 63.

This sequence belongs to the TRAFAC class TrmE-Era-EngA-EngB-Septin-like GTPase superfamily. EngB GTPase family. Mg(2+) serves as cofactor.

Its function is as follows. Necessary for normal cell division and for the maintenance of normal septation. The polypeptide is Probable GTP-binding protein EngB (Ehrlichia ruminantium (strain Gardel)).